A 450-amino-acid polypeptide reads, in one-letter code: Tubulin alpha-3 chain (450 aa).

Residue glutamine 11 coordinates GTP. Residue lysine 40 is modified to N6-acetyllysine. GTP-binding residues include glutamate 71, serine 140, glycine 144, threonine 145, threonine 179, asparagine 206, and asparagine 228. Residue glutamate 71 participates in Mg(2+) binding. Glutamate 254 is an active-site residue.

The protein belongs to the tubulin family. Dimer of alpha and beta chains. A typical microtubule is a hollow water-filled tube with an outer diameter of 25 nm and an inner diameter of 15 nM. Alpha-beta heterodimers associate head-to-tail to form protofilaments running lengthwise along the microtubule wall with the beta-tubulin subunit facing the microtubule plus end conferring a structural polarity. Microtubules usually have 13 protofilaments but different protofilament numbers can be found in some organisms and specialized cells. Mg(2+) serves as cofactor. Post-translationally, undergoes a tyrosination/detyrosination cycle, the cyclic removal and re-addition of a C-terminal tyrosine residue by the enzymes tubulin tyrosine carboxypeptidase (TTCP) and tubulin tyrosine ligase (TTL), respectively. Acetylation of alpha chains at Lys-40 stabilizes microtubules and affects affinity and processivity of microtubule motors. This modification has a role in multiple cellular functions, ranging from cell motility, cell cycle progression or cell differentiation to intracellular trafficking and signaling. During the early stages of oogenesis lky/Alpha-tubulin N-acetyltransferase 2 is the main acetyltransferase responsible for Lys-40 acetylation in germline cells while Atat/alpha-tubulin N-acetyltransferase 1 is the main acetyltransferase responsible for Lys-40 acetylation in somatic cells.

The protein localises to the cytoplasm. It localises to the cytoskeleton. It catalyses the reaction GTP + H2O = GDP + phosphate + H(+). Its function is as follows. Tubulin is the major constituent of microtubules, a cylinder consisting of laterally associated linear protofilaments composed of alpha- and beta-tubulin heterodimers. Microtubules grow by the addition of GTP-tubulin dimers to the microtubule end, where a stabilizing cap forms. Below the cap, tubulin dimers are in GDP-bound state, owing to GTPase activity of alpha-tubulin. This is Tubulin alpha-3 chain (alphaTub84D) from Drosophila melanogaster (Fruit fly).